We begin with the raw amino-acid sequence, 569 residues long: Urease subunit alpha (569 aa).

A Urease domain is found at 131 to 569 (GGIDTHIHFI…LPLAQRYLLL (439 aa)). 3 residues coordinate Ni(2+): H136, H138, and K219. N6-carboxylysine is present on K219. H221 is a substrate binding site. Ni(2+)-binding residues include H248 and H274. The active-site Proton donor is H322. D362 lines the Ni(2+) pocket.

It belongs to the metallo-dependent hydrolases superfamily. Urease alpha subunit family. In terms of assembly, heterotrimer of UreA (gamma), UreB (beta) and UreC (alpha) subunits. Three heterotrimers associate to form the active enzyme. It depends on Ni cation as a cofactor. Carboxylation allows a single lysine to coordinate two nickel ions.

It is found in the cytoplasm. The catalysed reaction is urea + 2 H2O + H(+) = hydrogencarbonate + 2 NH4(+). It functions in the pathway nitrogen metabolism; urea degradation; CO(2) and NH(3) from urea (urease route): step 1/1. This chain is Urease subunit alpha, found in Synechococcus sp. (strain CC9311).